The primary structure comprises 391 residues: Lipid-A-disaccharide synthase (391 aa).

The protein belongs to the LpxB family.

It carries out the reaction a lipid X + a UDP-2-N,3-O-bis[(3R)-3-hydroxyacyl]-alpha-D-glucosamine = a lipid A disaccharide + UDP + H(+). It functions in the pathway bacterial outer membrane biogenesis; LPS lipid A biosynthesis. Functionally, condensation of UDP-2,3-diacylglucosamine and 2,3-diacylglucosamine-1-phosphate to form lipid A disaccharide, a precursor of lipid A, a phosphorylated glycolipid that anchors the lipopolysaccharide to the outer membrane of the cell. The protein is Lipid-A-disaccharide synthase of Aromatoleum aromaticum (strain DSM 19018 / LMG 30748 / EbN1) (Azoarcus sp. (strain EbN1)).